The sequence spans 1111 residues: MNSPNESDGMPGREPSLEILPRTPLHSIPVAVEVKPVLPGAMPSSMGGGGGGSPSPVELRGALAGPMDPALREQQLQQELLVLKQQQQLQKQLLFAEFQKQHDHLTRQHEVQLQKHLKQQQEMLAAKRQQELEQQRQREQQRQEELEKQRLEQQLLILRNKEKSKESAIASTEVKLRLQEFLLSKSKEPTPGSLNHSLPQHPKCWGAHHASLDQSSPPQSGPPGTPPSYKLPLLGPYDSRDDFPLRKTASEPNLKVRSRLKQKVAERRSSPLLRRKDGTVISTFKKRAVEITGTGPGVSSVCNSAPGSGPSSPNSSHSAIAENGFTGSVPNIPTEMLPQHRALPLDSSPNQFSLYTSPSLPNISLGLQATVTVTNSHLTASPKLSTQQEAERQALQSLRQGGTLTGKFMSTSSIPGCLLGVTLEGDTSPHGHASLLQHVLLLEQARQQSTLIAVPLHGQSPLVTGERVATSMRTVGKLPRHRPLSRTQSSPLPQSPQALQQLVMQQQHQQFLEKQKQQQMQLGKILTKTGELPRQPTTHPEETEEELTEQQEALLGEGALTMPREGSTESESTQEDLEEEEDEEEEDEDCIQVKDEEGESGPDEGPDLEESSAGYKKLFTDAQQLQPLQVYQAPLSLATVPHQALGRTQSSPAAPGSMKSPPDQPTKHLFTTGVVYDTFMLKHQCMCGNTHVHPEHAGRIQSIWSRLQETGLLSKCERIRGRKATLDEIQTVHSEYHTLLYGTSPLNRQKLDSKKLLGPISQKMYAMLPCGGIGVDSDTVWNEMHSSSAVRMAVGCLVELAFKVAAGELKNGFAIIRPPGHHAEESTAMGFCFFNSVAITAKLLQQKLNVGKVLIVDWDIHHGNGTQQAFYDDPSVLYISLHRYDNGNFFPGSGAPEEVGGGPGMGYNVNVAWTGGVDPPIGDVEYLTAFRTVVMPIAHEFSPDVVLVSAGFDAVEGHLSPLGGYSVTARCFGHLTRQLMTLAGGRVVLALEGGHDLTAICDASEACVSALLSVELQPLDEAVLQQKPSINAVATLEKVIEIQSKHWSCVQRFATGLGCSLQEAQAGETEEAETVSAMALLSVGAEQAQAVATQEHSPRPAEEPMEQEPTL.

A Glycyl lysine isopeptide (Lys-Gly) (interchain with G-Cter in SUMO2) cross-link involves residue Lys35. 3 disordered regions span residues 40-63 (GAMP…RGAL), 107-136 (RQHE…EQQR), and 187-272 (KEPT…SSPL). Basic and acidic residues predominate over residues 238-249 (DSRDDFPLRKTA). Ser250 is modified (phosphoserine; by AMPK, CaMK1, SIK1 and PKD/PRKD1). The segment covering 263-272 (KVAERRSSPL) has biased composition (basic and acidic residues). The residue at position 283 (Thr283) is a Phosphothreonine; by PKC. The segment at 474-495 (TVGKLPRHRPLSRTQSSPLPQS) is disordered. Low complexity predominate over residues 485–495 (SRTQSSPLPQS). Ser489 is subject to Phosphoserine; by AMPK, CaMK1, SIK1 and PKD/PRKD1. Lys524 is subject to N6-acetyllysine. Disordered stretches follow at residues 527–611 (TKTG…LEES) and 645–666 (LGRT…DQPT). The segment covering 572–610 (STQEDLEEEEDEEEEDEDCIQVKDEEGESGPDEGPDLEE) has biased composition (acidic residues). Phosphoserine occurs at positions 600 and 650. The interval 671–1017 (TTGVVYDTFM…VSALLSVELQ (347 aa)) is histone deacetylase. 4 residues coordinate Zn(2+): Cys685, Cys687, His693, and Cys770. His822 is a catalytic residue. The short motif at 1070-1109 (EEAETVSAMALLSVGAEQAQAVATQEHSPRPAEEPMEQEP) is the Nuclear export signal element. Positions 1086–1111 (EQAQAVATQEHSPRPAEEPMEQEPTL) are disordered. Ser1097 bears the Phosphoserine mark.

Belongs to the histone deacetylase family. HD type 2 subfamily. In terms of assembly, interacts with AHRR, BAHD1, BCOR, HDAC7, HDAC9, CTBP1, MEF2C, NCOR2, NRIP1, PHB2 and a 14-3-3 chaperone protein. Interacts with BCL6, DDIT3/CHOP, GRK5, KDM5B and MYOCD. Interacts with EP300 in the presence of TFAP2C. Interacts with ANKRA2. Interacts with CUL7 (as part of the 3M complex); negatively regulated by ANKRA2. Interacts with ZBTB7B; the interaction allows the recruitment of HDAC4 on CD8 loci for deacetylation and possible inhibition of CD8 genes expression. Interacts with RARA. Post-translationally, phosphorylated by AMPK, CaMK1, SIK1 and PRKD1 at Ser-250 and Ser-489. The phosphorylation is required for the export to the cytoplasm and inhibition. Phosphorylated by the PKC kinases PKN1 and PKN2, impairing nuclear import. Phosphorylated by GRK5, leading to nuclear export of HDAC5 and allowing MEF2-mediated transcription. Ubiquitinated. Polyubiquitination however does not lead to its degradation.

Its subcellular location is the nucleus. It is found in the cytoplasm. It carries out the reaction N(6)-acetyl-L-lysyl-[histone] + H2O = L-lysyl-[histone] + acetate. In terms of biological role, responsible for the deacetylation of lysine residues on the N-terminal part of the core histones (H2A, H2B, H3 and H4). Histone deacetylation gives a tag for epigenetic repression and plays an important role in transcriptional regulation, cell cycle progression and developmental events. Histone deacetylases act via the formation of large multiprotein complexes. Involved in muscle maturation by repressing transcription of myocyte enhancer MEF2C. During muscle differentiation, it shuttles into the cytoplasm, allowing the expression of myocyte enhancer factors. Serves as a corepressor of RARA and causes its deacetylation. In association with RARA, plays a role in the repression of microRNA-10a and thereby in the inflammatory response. The chain is Histone deacetylase 5 (HDAC5) from Cricetulus griseus (Chinese hamster).